The following is an 857-amino-acid chain: Facilitated trehalose transporter Tret1-1 (857 aa).

Disordered regions lie at residues Met1 to Glu28 and Asp62 to Ser203. The Cytoplasmic segment spans residues Met1–Tyr392. The span at Val69–Thr81 shows a compositional bias: polar residues. The segment covering Glu134–Gln143 has biased composition (basic and acidic residues). Residues Gly171–Ala181 show a composition bias toward polar residues. Ser248, Ser249, Ser250, Ser320, and Ser322 each carry phosphoserine. The segment at Leu327–Ser346 is disordered. A compositionally biased stretch (polar residues) spans Arg330–Thr341. The helical transmembrane segment at Ile393–Val413 threads the bilayer. Residues Ser414–Ser440 are Extracellular-facing. An N-linked (GlcNAc...) asparagine glycan is attached at Asn428. Residues Trp441 to Ile461 traverse the membrane as a helical segment. The Cytoplasmic portion of the chain corresponds to Glu462 to Thr473. Residues Ala474–Leu494 traverse the membrane as a helical segment. The Extracellular segment spans residues Cys495 to Arg497. A helical transmembrane segment spans residues Phe498 to Thr518. Topologically, residues Val519–Gly528 are cytoplasmic. The helical transmembrane segment at Leu529 to Met549 threads the bilayer. An N-linked (GlcNAc...) asparagine glycan is attached at Asn550. Residues Asn550–Ser552 lie on the Extracellular side of the membrane. A helical membrane pass occupies residues Met553 to Pro573. The Cytoplasmic segment spans residues Glu574–Pro636. Residues Leu637–Phe657 form a helical membrane-spanning segment. Residues Tyr658–Asn673 lie on the Extracellular side of the membrane. A helical membrane pass occupies residues Leu674–Ile694. The Cytoplasmic portion of the chain corresponds to Asp695–Lys700. Residues Ile701–Phe721 traverse the membrane as a helical segment. Residues Tyr722 to Cys740 lie on the Extracellular side of the membrane. Residues Phe741–Gly761 form a helical membrane-spanning segment. Topologically, residues Glu762 to Gly770 are cytoplasmic. Residues Pro771–Phe791 traverse the membrane as a helical segment. Residues Gln792–His801 lie on the Extracellular side of the membrane. Residues Gly802–Val822 form a helical membrane-spanning segment. Residues Pro823 to Met857 are Cytoplasmic-facing. Ser845 and Ser846 each carry phosphoserine.

Belongs to the major facilitator superfamily. Sugar transporter (TC 2.A.1.1) family. Trehalose transporter subfamily.

The protein resides in the cell membrane. In terms of biological role, low-capacity facilitative transporter for trehalose. Does not transport maltose, sucrose or lactose. Mediates the bidirectional transfer of trehalose. Responsible for the transport of trehalose synthesized in the fat body and the incorporation of trehalose into other tissues that require a carbon source, thereby regulating trehalose levels in the hemolymph. The chain is Facilitated trehalose transporter Tret1-1 from Drosophila simulans (Fruit fly).